We begin with the raw amino-acid sequence, 635 residues long: Probable potassium transport system protein Kup (635 aa).

Helical transmembrane passes span 20–40 (MALV…SPLY), 62–82 (VLSL…VTII), 111–131 (AYVV…DGVI), 149–169 (PSLH…VFMV), 180–200 (VFGP…IWNI), 223–243 (GWHG…GEAL), 259–279 (WYFF…ALVL), 292–312 (AVPS…AVIA), 349–369 (IYVP…VLIF), 377–397 (VAYG…LALV), 408–428 (WVLP…IANG), and 429–449 (AKLL…FTLM).

The protein belongs to the HAK/KUP transporter (TC 2.A.72) family.

It localises to the cell inner membrane. It carries out the reaction K(+)(in) + H(+)(in) = K(+)(out) + H(+)(out). In terms of biological role, transport of potassium into the cell. Likely operates as a K(+):H(+) symporter. The chain is Probable potassium transport system protein Kup from Xanthomonas campestris pv. campestris (strain 8004).